Here is a 98-residue protein sequence, read N- to C-terminus: Cobalt transport protein CbiN (98 aa).

Transmembrane regions (helical) follow at residues 6–26 (VLMI…YSGL) and 68–88 (SLLF…FFGY).

The protein belongs to the CbiN family. As to quaternary structure, forms an energy-coupling factor (ECF) transporter complex composed of an ATP-binding protein (A component, CbiO), a transmembrane protein (T component, CbiQ) and 2 possible substrate-capture proteins (S components, CbiM and CbiN) of unknown stoichimetry.

The protein resides in the cell membrane. Its pathway is cofactor biosynthesis; adenosylcobalamin biosynthesis. Its function is as follows. Part of the energy-coupling factor (ECF) transporter complex CbiMNOQ involved in cobalt import. The polypeptide is Cobalt transport protein CbiN (Methanococcus maripaludis (strain DSM 14266 / JCM 13030 / NBRC 101832 / S2 / LL)).